We begin with the raw amino-acid sequence, 137 residues long: uncharacterized protein (137 aa).

This is an uncharacterized protein from Saccharomyces cerevisiae (strain ATCC 204508 / S288c) (Baker's yeast).